Consider the following 589-residue polypeptide: Isocitrate dehydrogenase kinase/phosphatase (589 aa).

ATP-binding positions include 322 to 328 and Lys343; that span reads APGIRGL. Residue Asp378 is part of the active site.

This sequence belongs to the AceK family.

The protein resides in the cytoplasm. The enzyme catalyses L-seryl-[isocitrate dehydrogenase] + ATP = O-phospho-L-seryl-[isocitrate dehydrogenase] + ADP + H(+). Bifunctional enzyme which can phosphorylate or dephosphorylate isocitrate dehydrogenase (IDH) on a specific serine residue. This is a regulatory mechanism which enables bacteria to bypass the Krebs cycle via the glyoxylate shunt in response to the source of carbon. When bacteria are grown on glucose, IDH is fully active and unphosphorylated, but when grown on acetate or ethanol, the activity of IDH declines drastically concomitant with its phosphorylation. The chain is Isocitrate dehydrogenase kinase/phosphatase from Azoarcus sp. (strain BH72).